A 289-amino-acid polypeptide reads, in one-letter code: Protease HtpX homolog (289 aa).

A run of 2 helical transmembrane segments spans residues 8 to 28 and 29 to 49; these read LALLAALSGLLIAISYWVIGG and SSGLIIGIGLAAVTNLLSWYQ. H132 contacts Zn(2+). The active site involves E133. A Zn(2+)-binding site is contributed by H136. A run of 2 helical transmembrane segments spans residues 151-171 and 183-203; these read VAGAISFLAQMVSYSLWFGGI and LGVLLTVVLAPIAATIIQLAI. E208 lines the Zn(2+) pocket.

Belongs to the peptidase M48B family. Requires Zn(2+) as cofactor.

Its subcellular location is the cell inner membrane. The chain is Protease HtpX homolog from Trichormus variabilis (strain ATCC 29413 / PCC 7937) (Anabaena variabilis).